Reading from the N-terminus, the 350-residue chain is 2-oxoglutarate-dependent ethylene/succinate-forming enzyme (350 aa).

A Fe2OG dioxygenase domain is found at 166 to 286; it reads GWHHMRVLRF…RFACAYFHEP (121 aa). H189 and H268 together coordinate Fe cation.

The protein belongs to the iron/ascorbate-dependent oxidoreductase family. As to quaternary structure, monomer. Fe(2+) is required as a cofactor.

It carries out the reaction 2-oxoglutarate + O2 + 2 H(+) = ethene + 3 CO2 + H2O. The enzyme catalyses L-arginine + 2-oxoglutarate + O2 = guanidine + L-glutamate 5-semialdehyde + succinate + CO2. It participates in alkene biosynthesis; ethylene biosynthesis via 2-oxoglutarate. Its function is as follows. Simultaneously catalyzes two reactions, namely formation of ethylene and of succinate from 2-oxoglutarate. This is 2-oxoglutarate-dependent ethylene/succinate-forming enzyme (efe) from Pseudomonas amygdali pv. sesami (Pseudomonas syringae pv. sesami).